The sequence spans 449 residues: Glucose-6-phosphate isomerase (449 aa).

The Proton donor role is filled by Glu291. Catalysis depends on residues His312 and Lys426.

The protein belongs to the GPI family.

It localises to the cytoplasm. It carries out the reaction alpha-D-glucose 6-phosphate = beta-D-fructose 6-phosphate. It participates in carbohydrate biosynthesis; gluconeogenesis. Its pathway is carbohydrate degradation; glycolysis; D-glyceraldehyde 3-phosphate and glycerone phosphate from D-glucose: step 2/4. Its function is as follows. Catalyzes the reversible isomerization of glucose-6-phosphate to fructose-6-phosphate. The chain is Glucose-6-phosphate isomerase from Streptococcus pyogenes serotype M1.